A 166-amino-acid chain; its full sequence is D-aminoacyl-tRNA deacylase (166 aa).

A Gly-cisPro motif, important for rejection of L-amino acids motif is present at residues 142–143 (GP).

Belongs to the DTD family. As to quaternary structure, homodimer.

The protein resides in the cytoplasm. The enzyme catalyses glycyl-tRNA(Ala) + H2O = tRNA(Ala) + glycine + H(+). It catalyses the reaction a D-aminoacyl-tRNA + H2O = a tRNA + a D-alpha-amino acid + H(+). Its function is as follows. An aminoacyl-tRNA editing enzyme that deacylates mischarged D-aminoacyl-tRNAs. Also deacylates mischarged glycyl-tRNA(Ala), protecting cells against glycine mischarging by AlaRS. Acts via tRNA-based rather than protein-based catalysis; rejects L-amino acids rather than detecting D-amino acids in the active site. By recycling D-aminoacyl-tRNA to D-amino acids and free tRNA molecules, this enzyme counteracts the toxicity associated with the formation of D-aminoacyl-tRNA entities in vivo and helps enforce protein L-homochirality. The protein is D-aminoacyl-tRNA deacylase of Ralstonia nicotianae (strain ATCC BAA-1114 / GMI1000) (Ralstonia solanacearum).